Here is a 323-residue protein sequence, read N- to C-terminus: Putative HTH-type transcriptional regulatory protein Mbur_1811 (323 aa).

The 59-residue stretch at 132-190 (LKEARMNVSMSLGALASELGVSRRTISKYEEGQMDASIDIVLHLEEILDMALAKSIDIL) folds into the HTH cro/C1-type domain. A DNA-binding region (H-T-H motif) is located at residues 143–162 (LGALASELGVSRRTISKYEE).

The sequence is that of Putative HTH-type transcriptional regulatory protein Mbur_1811 from Methanococcoides burtonii (strain DSM 6242 / NBRC 107633 / OCM 468 / ACE-M).